Consider the following 438-residue polypeptide: Coenzyme A disulfide reductase (438 aa).

8 to 33 is a binding site for FAD; the sequence is GAVAGGATCASQIRRLDKESEIIVFE. Positions 15, 19, 22, 39, and 42 each coordinate substrate. Cys43 (nucleophile) is an active-site residue. Catalysis depends on Cys43, which acts as the Redox-active. Residue Lys71 participates in substrate binding. 151 to 166 serves as a coordination point for NADP(+); it reads ALVVGAGYISLEVLEN. Position 267–277 (267–277) interacts with FAD; sequence TNIPNIYALGD. His299 provides a ligand contact to substrate. Tyr419 contributes to the FAD binding site. Lys427 serves as a coordination point for substrate.

The protein belongs to the class-III pyridine nucleotide-disulfide oxidoreductase family. As to quaternary structure, homodimer. Requires FAD as cofactor.

The enzyme catalyses NADP(+) + 2 CoA = CoA-disulfide + NADPH + H(+). Catalyzes specifically the NADPH-dependent reduction of coenzyme A disulfide. In Staphylococcus epidermidis (strain ATCC 35984 / DSM 28319 / BCRC 17069 / CCUG 31568 / BM 3577 / RP62A), this protein is Coenzyme A disulfide reductase.